The primary structure comprises 159 residues: Bacterioferritin (159 aa).

The region spanning Met1–Gly145 is the Ferritin-like diiron domain. 2 residues coordinate Fe cation: Glu18 and Glu51. Met52 is a binding site for heme b. Fe cation is bound by residues His54, Glu94, Glu127, and His130.

This sequence belongs to the bacterioferritin family. Homooligomer of 24 subunits, arranged as 12 dimers, that are packed together to form an approximately spherical molecule with a central cavity, in which large amounts of iron can be deposited. It depends on heme b as a cofactor.

The catalysed reaction is 4 Fe(2+) + O2 + 4 H(+) = 4 Fe(3+) + 2 H2O. It catalyses the reaction Fe(2+)(in) = Fe(2+)(out). Its function is as follows. Iron-storage protein, whose ferroxidase center binds Fe(2+), oxidizes it using dioxygen to Fe(3+), and participates in the subsequent Fe(3+) oxide mineral core formation within the central cavity of the BFR protein shell. The protein is Bacterioferritin (bfr) of Mycolicibacterium paratuberculosis (strain ATCC BAA-968 / K-10) (Mycobacterium paratuberculosis).